The chain runs to 279 residues: 3-methyl-2-oxobutanoate hydroxymethyltransferase (279 aa).

Mg(2+) is bound by residues D43 and D82. 3-methyl-2-oxobutanoate is bound by residues 43-44 (DS), D82, and K112. Mg(2+) is bound at residue E114. E181 acts as the Proton acceptor in catalysis.

The protein belongs to the PanB family. In terms of assembly, homodecamer; pentamer of dimers. It depends on Mg(2+) as a cofactor.

The protein localises to the cytoplasm. The catalysed reaction is 3-methyl-2-oxobutanoate + (6R)-5,10-methylene-5,6,7,8-tetrahydrofolate + H2O = 2-dehydropantoate + (6S)-5,6,7,8-tetrahydrofolate. Its pathway is cofactor biosynthesis; (R)-pantothenate biosynthesis; (R)-pantoate from 3-methyl-2-oxobutanoate: step 1/2. Functionally, catalyzes the reversible reaction in which hydroxymethyl group from 5,10-methylenetetrahydrofolate is transferred onto alpha-ketoisovalerate to form ketopantoate. The chain is 3-methyl-2-oxobutanoate hydroxymethyltransferase from Shouchella clausii (strain KSM-K16) (Alkalihalobacillus clausii).